A 186-amino-acid polypeptide reads, in one-letter code: Ribulose bisphosphate carboxylase small subunit, chloroplastic 6 (186 aa).

A chloroplast-targeting transit peptide spans 1-60 (MASSMLSNAAVATTAASRSAGAQASMVAPFTGLKSVSAFPVTRKSSNDLSTVPSNGGKVQ).

The protein belongs to the RuBisCO small chain family. As to quaternary structure, heterohexadecamer of 8 large and 8 small subunits.

The protein localises to the plastid. The protein resides in the chloroplast. Its function is as follows. RuBisCO catalyzes two reactions: the carboxylation of D-ribulose 1,5-bisphosphate, the primary event in carbon dioxide fixation, as well as the oxidative fragmentation of the pentose substrate. Both reactions occur simultaneously and in competition at the same active site. Although the small subunit is not catalytic it is essential for maximal activity. The protein is Ribulose bisphosphate carboxylase small subunit, chloroplastic 6 of Mesembryanthemum crystallinum (Common ice plant).